The primary structure comprises 407 residues: Cytochrome P450-pinF2, plant-inducible (407 aa).

Cys-356 lines the heme pocket.

The protein belongs to the cytochrome P450 family. It depends on heme as a cofactor.

Not essential for virulence, but may be involved in the detoxification of plant protective agents at the site of wounding. This chain is Cytochrome P450-pinF2, plant-inducible (cyp104), found in Rhizobium radiobacter (Agrobacterium tumefaciens).